The sequence spans 542 residues: MEKEEKSNLIYDKDPGYVWDNKNECEGAAEETYQELNYEPSISADKLTWTPTRLAKTVFNTYEDDDDFNVLCYFTDWSQYDPRIINKEIRDTGGRSADILRLNTPDGRPFKRLIYSFGGLIGDKKYSADGNASIAVRLGVATDPDDAIANHKGKTIPVDPDGAVLASINCGFTKWEAGDANERYNQEKAKGLLGGFRLLHEADKELEFSLSIGGWSMSGLFSEIAKDEILRTNFVEGIKDFFQRFPMFSHLDIDWEYPGSIGAGNPNSPDDGANFAILIQQITDAKISNLKGISIASSADPAKIDAANIPALMDAGVTGINLMTYDFFTLGDGKLSHHTNIYRDPSDVYSKYSIDDAVTHLIDEKKVDPKAIFIGYAGYTRNAKNATITTSIPSEEALKGTYTDANQTLGSFEYSVLEWTDIICHYMDFEKGEGRNGYKLVHDKVAKADYLYSEATKVFISLDTPRSVRDKGRYVKDKGLGGLFIWSGDQDNGILTNAAHEGLKRRIKNKVIDMTPFYLDSDEELPTYTEPAEPQCEACNIK.

The 439-residue stretch at 68-506 (FNVLCYFTDW…NAAHEGLKRR (439 aa)) folds into the GH18 domain. Chitin is bound by residues 186–187 (QE) and 213–216 (GGWS). E256 serves as the catalytic Proton donor. Chitin-binding positions include Y257, 323–326 (MTYD), and W486.

Belongs to the glycosyl hydrolase 18 family. In terms of assembly, semipurified toxin complex consists of at least YenA1-YenA2-YenB-YenC1-YenC2-Chi1-Chi2. The Yen-TC:K9 subcomplex is about 26 nm tall and 22 nm in diameter with 5-fold symmetry and 5 copies of YenA1, YenA2, Chi1 and Chi2; the chitinase subunits may be solvent accessible on the exterior the complex. The Yen-TC:K9 subcomplex has no insecticidal activity. The native complex with additional YenB, YenC1 and YenC2 subunits is 16 nm taller and is insecticidal; the toxicity-conferring subunits are present at about 1 copy each.

It is found in the secreted. The catalysed reaction is Random endo-hydrolysis of N-acetyl-beta-D-glucosaminide (1-&gt;4)-beta-linkages in chitin and chitodextrins.. With respect to regulation, toxin complex is secreted when grown at 25 degrees Celsius or less; at higher temperatures the proteins are present intracellularly but not secreted. Functionally, part of an orally active toxin complex (TC) with strong insecticidal effects on larvae of the Coleoptera Costelytra zealandica, Acrossidius tasmania and Adoryphorus couloni and some Lepidoptera larvae. The TC has an endochitinase activity. This subunit might aid infection by degradation of the larval peritrophic membrane. This chain is Chitinase 1, found in Yersinia entomophaga.